The chain runs to 179 residues: Large ribosomal subunit protein uL5 (179 aa).

It belongs to the universal ribosomal protein uL5 family. In terms of assembly, part of the 50S ribosomal subunit; part of the 5S rRNA/L5/L18/L25 subcomplex. Contacts the 5S rRNA and the P site tRNA. Forms a bridge to the 30S subunit in the 70S ribosome.

Functionally, this is one of the proteins that bind and probably mediate the attachment of the 5S RNA into the large ribosomal subunit, where it forms part of the central protuberance. In the 70S ribosome it contacts protein S13 of the 30S subunit (bridge B1b), connecting the 2 subunits; this bridge is implicated in subunit movement. Contacts the P site tRNA; the 5S rRNA and some of its associated proteins might help stabilize positioning of ribosome-bound tRNAs. This Burkholderia multivorans (strain ATCC 17616 / 249) protein is Large ribosomal subunit protein uL5.